The sequence spans 296 residues: DNA-3-methyladenine glycosylase (296 aa).

Phosphoserine is present on S110. The active-site Proton acceptor is D209.

It belongs to the alkylbase DNA glycosidase AlkA family.

Its subcellular location is the nucleus. It catalyses the reaction Hydrolysis of alkylated DNA, releasing 3-methyladenine, 3-methylguanine, 7-methylguanine and 7-methyladenine.. Functionally, hydrolysis of the deoxyribose N-glycosidic bond to excise 3-methyladenine or 7-methyladenine from the damaged DNA polymer formed by alkylation lesions. This Saccharomyces cerevisiae (strain ATCC 204508 / S288c) (Baker's yeast) protein is DNA-3-methyladenine glycosylase (MAG1).